The sequence spans 75 residues: Small ribosomal subunit protein bS18 (75 aa).

The protein belongs to the bacterial ribosomal protein bS18 family. As to quaternary structure, part of the 30S ribosomal subunit. Forms a tight heterodimer with protein bS6.

In terms of biological role, binds as a heterodimer with protein bS6 to the central domain of the 16S rRNA, where it helps stabilize the platform of the 30S subunit. This is Small ribosomal subunit protein bS18 from Shewanella loihica (strain ATCC BAA-1088 / PV-4).